Reading from the N-terminus, the 409-residue chain is Glycoprotein 55 (409 aa).

Residues 1-32 (MKGPAFSKPLKDKINPWGPLIVLGILIRAGVS) form the signal peptide. Residues 33-384 (VQHDSPHQVF…SFNRSPWFTT (352 aa)) are Virion surface-facing. 2 N-linked (GlcNAc...) asparagine; by host glycosylation sites follow: Asn43 and Asn58. A disordered region spans residues 254–280 (PRPPQPPPTGAASMVPGTAPPSQQPGT). Asn296 and Asn328 each carry an N-linked (GlcNAc...) asparagine; by host glycan. Residues 385–405 (LISTIMGLLIILLLLLILLLW) traverse the membrane as a helical segment. Topologically, residues 406-409 (TLHS) are intravirion.

As to quaternary structure, homooligomer. Forms heterooligomers with mouse EPOR, probably via their respective transmembrane domains. Forms covalent heterodimers with mouse MST1R isoform sf-Stk, probably via disulfide bonds.

The protein localises to the host endoplasmic reticulum membrane. It localises to the host cell membrane. It is found in the virion membrane. In terms of biological role, this envelope-like membrane glycoprotein is responsible for ligand-independent activation of the erythropoietin receptor EPOR leading to the abnormally rapid proliferation of erythroid precursor cells. In the first stage of Friend disease, constitutive activation of EPOR by gp55 causes uncontrolled, polyclonal proliferation of infected erythroblasts, leading to polycythemia (massive increase in the number of mature red cells). Host susceptibility to SSFV-induced erythroblastosis depends on the expression of the truncated isoform of MST1R receptor tyrosine kinase (MST1R isoform sf-Stk). Interaction with SSFV gp 55 results in constitutive tyrosine phosphorylation and activation of MST1R isoform sf-Stk. This chain is Glycoprotein 55 (env), found in Mus musculus (Mouse).